We begin with the raw amino-acid sequence, 742 residues long: Phosphoribosylformylglycinamidine synthase subunit PurL (742 aa).

H54 is a catalytic residue. Positions 57 and 96 each coordinate ATP. E98 contacts Mg(2+). Substrate contacts are provided by residues 99–102 (SHNH) and R121. H100 functions as the Proton acceptor in the catalytic mechanism. D122 contributes to the Mg(2+) binding site. Q245 lines the substrate pocket. D273 is a Mg(2+) binding site. 317–319 (ESQ) lines the substrate pocket. ATP is bound by residues D500 and G537. N538 lines the Mg(2+) pocket. S540 contributes to the substrate binding site.

This sequence belongs to the FGAMS family. In terms of assembly, monomer. Part of the FGAM synthase complex composed of 1 PurL, 1 PurQ and 2 PurS subunits.

It localises to the cytoplasm. The enzyme catalyses N(2)-formyl-N(1)-(5-phospho-beta-D-ribosyl)glycinamide + L-glutamine + ATP + H2O = 2-formamido-N(1)-(5-O-phospho-beta-D-ribosyl)acetamidine + L-glutamate + ADP + phosphate + H(+). Its pathway is purine metabolism; IMP biosynthesis via de novo pathway; 5-amino-1-(5-phospho-D-ribosyl)imidazole from N(2)-formyl-N(1)-(5-phospho-D-ribosyl)glycinamide: step 1/2. Part of the phosphoribosylformylglycinamidine synthase complex involved in the purines biosynthetic pathway. Catalyzes the ATP-dependent conversion of formylglycinamide ribonucleotide (FGAR) and glutamine to yield formylglycinamidine ribonucleotide (FGAM) and glutamate. The FGAM synthase complex is composed of three subunits. PurQ produces an ammonia molecule by converting glutamine to glutamate. PurL transfers the ammonia molecule to FGAR to form FGAM in an ATP-dependent manner. PurS interacts with PurQ and PurL and is thought to assist in the transfer of the ammonia molecule from PurQ to PurL. In Geobacillus sp. (strain WCH70), this protein is Phosphoribosylformylglycinamidine synthase subunit PurL.